Here is a 351-residue protein sequence, read N- to C-terminus: (S)-coclaurine N-methyltransferase (351 aa).

Residues 91 to 92 (QS), 126 to 134 (VLDLGCGLG), 130 to 132 (GCG), and 153 to 158 (TSSVEQ) each bind S-adenosyl-L-methionine. The active site involves cysteine 326.

It belongs to the CFA/CMAS family. Expressed in roots, stems, flower buds and at lower levels, in leaves. Restricted to sieve elements of the phloem adjacent or proximal to laticifers.

Its subcellular location is the cytoplasm. The catalysed reaction is (S)-coclaurine + S-adenosyl-L-methionine = (S)-N-methylcoclaurine + S-adenosyl-L-homocysteine + H(+). Its pathway is alkaloid biosynthesis; (S)-reticuline biosynthesis; (S)-reticuline from (S)-norcoclaurine: step 2/4. Its function is as follows. Involved in the biosynthesis of benzylisoquinoline alkaloids. N-methyltransferase methylating (S)-coclaurine. 4'-O-methylcoclaurine and norlaudanine can also be used as substrates. This is (S)-coclaurine N-methyltransferase from Papaver somniferum (Opium poppy).